The primary structure comprises 203 residues: Urease accessory protein UreG (203 aa).

14–21 contacts GTP; the sequence is GPVGSGKT.

The protein belongs to the SIMIBI class G3E GTPase family. UreG subfamily. Homodimer. UreD, UreF and UreG form a complex that acts as a GTP-hydrolysis-dependent molecular chaperone, activating the urease apoprotein by helping to assemble the nickel containing metallocenter of UreC. The UreE protein probably delivers the nickel.

The protein localises to the cytoplasm. Facilitates the functional incorporation of the urease nickel metallocenter. This process requires GTP hydrolysis, probably effectuated by UreG. In Rhizobium leguminosarum bv. viciae, this protein is Urease accessory protein UreG.